The chain runs to 1163 residues: MNSEEMNHVNPFEISDNNDVSIPSQRYPFANDPADSVFCADDFLQSYGEFNMDNFGESEPFIDASGAINAAIGVTGTVLGFLGVPFAGALTTFYQKLFGFLFPNNNTKQWEEFMKQVEALIDEKISDAVRNKAISELQGLVNNITLYTEALEEWLENKENPAVRDRVLQRWRILDGFFEQQMPSFAVKGFEVLLLVVYTQAANLHLLSLRDAYIYGAEWGLTPTNIDQNHTRLLRHSAEYTDHCVNWYNTGLKQLENSDAKSWFQYNRFRREMTLSVLDVIALFPAYDVKMYPIPTNFQLTREVYTDVIGKIGRNDSDHWYSANAPSFSNLESTLIRTPHVVDYIKKLKIFYATVDYYGIYGRSGKWVGHIITSATSANTTETRNYGTIVNHDSVELNFEGKNIYKTGSLPQGVPPYQIGYVTPIYFITRAVNFFTVSGSKTSVEKYYSKKDRYYSEGLPEEQGVFSTEQLPPNSIAEPEHIAYSHRLCHVTFISVSNGNKYSKDLPLFSWTHSSVDFDNYVYPTKITQLPATKGYNVSIVKEPGFIGGDIGKNNGQILGKYKVNVEDVSQKYRFRVRYATETEGELGIKIDGRTVNLYQYKKTKAPGDPLTYKAFDYLSFSTPVKFNNASSTIELFLQNKTSGTFYLAGIEIIPVKSNYEEELTLEEAKKAVSSLFTDARNALKIDVTDYQIDQAANLVECISGDLYAKEKIVLLRAVKFAKQLSQSQNLLSDPEFNNVNRENSWTASTSVAIIEGDPLYKGRAVQLSSARDENFPTYLYQKIDESTLKPYTRYQLRGFVEGSENLDVYLIRYGAAHVRMNVPYNLEIIDTSSPVNPCEEVDGLSHRSCNVFDRCKQSISVAPDANTGPDQIDGDPHAFSFHIDTGTVDSTENLGIWVAFKISELDGSAIFGNLELIEVGPLSGEALAQVQRKEEKWKQVLAKKRETTAQTVCSGEASQLTNSSQILKIRNYDLIQNFRIFSLRNTLSIKFKIYTITNYPYSRLNYDLFMELENRIQNASLYMTSNILQNGGFKSDVTSWETTANAEVQQIDGASVLVLSNWNASVAQSVNVQNDHGYVLRVTAKKEGIGNGYVTILDCANHIDTLTFSACRSDSDTSSNELTAYVTKTLEIFPDTEQIRIEIGETEGMFYVESVELIRMEN.

This sequence belongs to the delta endotoxin family.

Functionally, promotes colloidosmotic lysis by binding to the midgut epithelial cells of insects. This Bacillus thuringiensis subsp. finitimus protein is Pesticidal crystal protein Cry26Aa (cry26Aa).